The chain runs to 227 residues: Cytidylate kinase (227 aa).

Position 12 to 20 (12 to 20) interacts with ATP; sequence GPSGAGKGT.

The protein belongs to the cytidylate kinase family. Type 1 subfamily.

The protein resides in the cytoplasm. The catalysed reaction is CMP + ATP = CDP + ADP. It catalyses the reaction dCMP + ATP = dCDP + ADP. This is Cytidylate kinase from Shigella boydii serotype 18 (strain CDC 3083-94 / BS512).